Here is a 109-residue protein sequence, read N- to C-terminus: uncharacterized protein (109 aa).

This is an uncharacterized protein from Treponema pallidum (strain Nichols).